We begin with the raw amino-acid sequence, 326 residues long: Lipoyl synthase (326 aa).

[4Fe-4S] cluster is bound by residues Cys56, Cys61, Cys67, Cys82, Cys86, Cys89, and Ser298. Residues 68-287 (WEDREATFLI…KDEADAIGYS (220 aa)) enclose the Radical SAM core domain.

Belongs to the radical SAM superfamily. Lipoyl synthase family. [4Fe-4S] cluster is required as a cofactor.

Its subcellular location is the cytoplasm. The enzyme catalyses [[Fe-S] cluster scaffold protein carrying a second [4Fe-4S](2+) cluster] + N(6)-octanoyl-L-lysyl-[protein] + 2 oxidized [2Fe-2S]-[ferredoxin] + 2 S-adenosyl-L-methionine + 4 H(+) = [[Fe-S] cluster scaffold protein] + N(6)-[(R)-dihydrolipoyl]-L-lysyl-[protein] + 4 Fe(3+) + 2 hydrogen sulfide + 2 5'-deoxyadenosine + 2 L-methionine + 2 reduced [2Fe-2S]-[ferredoxin]. Its pathway is protein modification; protein lipoylation via endogenous pathway; protein N(6)-(lipoyl)lysine from octanoyl-[acyl-carrier-protein]: step 2/2. Catalyzes the radical-mediated insertion of two sulfur atoms into the C-6 and C-8 positions of the octanoyl moiety bound to the lipoyl domains of lipoate-dependent enzymes, thereby converting the octanoylated domains into lipoylated derivatives. The sequence is that of Lipoyl synthase from Streptomyces griseus subsp. griseus (strain JCM 4626 / CBS 651.72 / NBRC 13350 / KCC S-0626 / ISP 5235).